Reading from the N-terminus, the 512-residue chain is Pantothenate transporter FEN2 (512 aa).

The Cytoplasmic portion of the chain corresponds to 1–27 (MMKESKSITQHEVERESVSSKRAIKKR). The chain crosses the membrane as a helical span at residues 28-48 (LLLFKIDLFVLSFVCLQYWIN). Residues 49 to 79 (YVDRVGFTNAYISGMKEDLKMVGNDLTVSNT) lie on the Extracellular side of the membrane. Residues 80-100 (VFMIGYIVGMVPNNLMLLCVP) form a helical membrane-spanning segment. The Cytoplasmic segment spans residues 101–102 (PR). Residues 103 to 123 (IWLSFCTFAWGLLTLGMYKVT) form a helical membrane-spanning segment. The Extracellular segment spans residues 124–132 (SFKHICAIR). A helical transmembrane segment spans residues 133–153 (FFQALFESCTFSGTHFVLGSW). At 154 to 164 (YKEDELPIRSA) the chain is on the cytoplasmic side. The helical transmembrane segment at 165 to 185 (IFTGSGLVGSMFSGFMQTSIF) threads the bilayer. Topologically, residues 186 to 198 (THLNGRNGLAGWR) are extracellular. The helical transmembrane segment at 199–219 (WLFIIDFCITLPIAIYGFIFF) threads the bilayer. The Cytoplasmic segment spans residues 220–271 (PGLPDQTSAVSKFSMTRYIFNEQELHYARRRLPARDESTRLDWSTIPRVLKR). Residues 272-292 (WHWWMFSLVWVLGGENLGFAS) form a helical membrane-spanning segment. Over 293-312 (NSTFALWLQNQKYTLAQRNN) the chain is Extracellular. A helical transmembrane segment spans residues 313–333 (YPSGIFAVGIVSTLCSAVYMS). Topologically, residues 334 to 342 (KIPRARHWH) are cytoplasmic. A helical transmembrane segment spans residues 343–363 (VSVFISLVMVIVAVLIRADPL). Residues 364 to 372 (NPKVVFSAQ) lie on the Extracellular side of the membrane. A helical transmembrane segment spans residues 373-393 (YLGGVAYAGQAVFFSWANIIC). The Cytoplasmic portion of the chain corresponds to 394–401 (HADLQERA). A helical membrane pass occupies residues 402-422 (IVLASMNMFSGAVNAWWSILF). Residues 423 to 434 (FASDMVPKFERG) lie on the Extracellular side of the membrane. Residues 435–455 (CYALLATAISSGIVSVVIRSL) traverse the membrane as a helical segment. The Cytoplasmic portion of the chain corresponds to 456–512 (QIKENLSKKQVPYIDANDMPGEDDDDDNQDNENDGDDESMEVELHNEEMAEISNPFR). The tract at residues 468–512 (YIDANDMPGEDDDDDNQDNENDGDDESMEVELHNEEMAEISNPFR) is disordered. Positions 475 to 496 (PGEDDDDDNQDNENDGDDESME) are enriched in acidic residues.

The protein belongs to the major facilitator superfamily. Allantoate permease family.

Its subcellular location is the cell membrane. Its function is as follows. Transports pantothenate into the cell. Also involved in the catabolite repression-mediated regulation of ergosterol biosynthesis and in fenpropimorph resistance. This is Pantothenate transporter FEN2 (FEN2) from Saccharomyces cerevisiae (strain ATCC 204508 / S288c) (Baker's yeast).